Reading from the N-terminus, the 445-residue chain is Secretin receptor (445 aa).

An N-terminal signal peptide occupies residues 1–21 (MCPRPGPPLGLWLLLGFACAA). Topologically, residues 22 to 137 (HLVGAPPRLC…HERQHAYLLK (116 aa)) are extracellular. 3 disulfide bridges follow: Cys-44/Cys-71, Cys-62/Cys-103, and Cys-85/Cys-119. N-linked (GlcNAc...) asparagine glycosylation is found at Asn-68, Asn-96, Asn-102, and Asn-124. Residues 138–163 (LKVMYTVGYSSSLVMLLVALGILCAF) traverse the membrane as a helical segment. Over 164–170 (RRLHCTR) the chain is Cytoplasmic. Residues 171-191 (NYIHMHLFLSFILRALSNFIK) form a helical membrane-spanning segment. Topologically, residues 192–212 (DAVLFSSDDAIHCDAHRVGCK) are extracellular. The cysteines at positions 211 and 281 are disulfide-linked. A helical transmembrane segment spans residues 213–235 (LVMVFFQYCIMANYAWLLVEGLY). The Cytoplasmic portion of the chain corresponds to 236–250 (LHSLLVVSFFSERKC). The helical transmembrane segment at 251–272 (LQGFVVLGWGSPAMFVTSWAVT) threads the bilayer. The Extracellular portion of the chain corresponds to 273–287 (RHFLEDSGCWDINAN). Residues 288–311 (AAIWWVIRGPVILSILINFILFIN) traverse the membrane as a helical segment. Over 312 to 336 (ILRILTRKLRTQETRGQDMNHYKRL) the chain is Cytoplasmic. A helical membrane pass occupies residues 337–352 (ARSTLLLIPLFGVHYI). Over 353–363 (VFVFSPEGAME) the chain is Extracellular. Residues 364–387 (IQLFFELALGSFQGLVVAVLYCFL) traverse the membrane as a helical segment. Over 388-445 (NGEVQLEVQKKWQQWHLWEPPLCPVALSSSFSNGTSSLNSTKACPSGRSRDTCKVSII) the chain is Cytoplasmic.

It belongs to the G-protein coupled receptor 2 family. Post-translationally, phosphorylated on Ser and Thr residues at the cytoplasmic C-terminus by G protein-coupled receptor kinases (GRKs).

Its subcellular location is the cell membrane. The protein localises to the basolateral cell membrane. Its function is as follows. G protein-coupled receptor activated by secretin (SCT), which is involved in different processes such as regulation of the pH of the duodenal content, food intake and water homeostasis. Ligand binding causes a conformation change that triggers signaling via guanine nucleotide-binding proteins (G proteins) and activates cAMP-dependent pathway. Upon binding to secretin, regulates the pH of the duodenum by (1) inhibiting the secretion of gastric acid from the parietal cells of the stomach and (2) stimulating the production of bicarbonate (NaHCO(3)) from the ductal cells of the pancreas. In addition to regulating the pH of the duodenal content, plays a central role in diet induced thermogenesis: acts as a non-sympathetic brown fat (BAT) activator mediating prandial thermogenesis, which consequentially induces satiation. Mechanistically, secretin released by the gut after a meal binds to secretin receptor (SCTR) in brown adipocytes, activating brown fat thermogenesis by stimulating lipolysis, which is sensed in the brain and promotes satiation. Also able to stimulate lipolysis in white adipocytes. Also plays an important role in cellular osmoregulation by regulating renal water reabsorption. Also plays a role in the central nervous system: required for synaptic plasticity. This chain is Secretin receptor (SCTR), found in Oryctolagus cuniculus (Rabbit).